The primary structure comprises 149 residues: Lipoprotein signal peptidase (149 aa).

2 helical membrane-spanning segments follow: residues 58-78 and 85-105; these read WFFI…LIRL and ASLA…DRAM. Active-site residues include Asp-111 and Asp-127. Residues 122 to 142 form a helical membrane-spanning segment; that stretch reads IFNVADMAITIGVGILLLDVF.

It belongs to the peptidase A8 family.

Its subcellular location is the cell membrane. It carries out the reaction Release of signal peptides from bacterial membrane prolipoproteins. Hydrolyzes -Xaa-Yaa-Zaa-|-(S,diacylglyceryl)Cys-, in which Xaa is hydrophobic (preferably Leu), and Yaa (Ala or Ser) and Zaa (Gly or Ala) have small, neutral side chains.. It participates in protein modification; lipoprotein biosynthesis (signal peptide cleavage). Its function is as follows. This protein specifically catalyzes the removal of signal peptides from prolipoproteins. The polypeptide is Lipoprotein signal peptidase (Brevibacillus brevis (strain 47 / JCM 6285 / NBRC 100599)).